The sequence spans 474 residues: MATEYDVVILGGGTGGYVAAIRAAQLGLKTAVVEKEKLGGTCLHKGCIPSKALLRSAEVYRTAREADQFGVETAGVSLNFEKVQQRKQAVVDKLAAGVNHLMKKGKIDVYTGYGRILGPSIFSPLPGTISVERGNGEENDMLIPKQVIIATGSRPRMLPGLEVDGKSVLTSDEALQMEELPQSIIIVGGGVIGIEWASMLHDFGVKVTVIEYADRILPTEDLEISKEMESLLKKKGIQFITGAKVLPDTMTKTSDDISIQAEKDGETVTYSAEKMLVSIGRQANIEGIGLENTDIVTENGMISVNESCQTKESHIYAIGDVIGGLQLAHVASHEGIIAVEHFAGLNPHPLDPTLVPKCIYSSPEAASVGLTEDEAKANGHNVKIGKFPFMAIGKALVYGESDGFVKIVADRDTDDILGVHMIGPHVTDMISEAGLAKVLDATPWEVGQTIHPHPTLSEAIGEAALAADGKAIHF.

FAD contacts are provided by residues 34–42 (EKEKLGGTC), K51, and G114. Cysteines 42 and 47 form a disulfide. Residues 188–192 (GGGVI), E211, V245, and 278–281 (SIGR) contribute to the NAD(+) site. FAD-binding residues include D320 and A328. Catalysis depends on H453, which acts as the Proton acceptor.

The protein belongs to the class-I pyridine nucleotide-disulfide oxidoreductase family. In terms of assembly, homodimer. FAD is required as a cofactor.

It is found in the cytoplasm. The enzyme catalyses N(6)-[(R)-dihydrolipoyl]-L-lysyl-[protein] + NAD(+) = N(6)-[(R)-lipoyl]-L-lysyl-[protein] + NADH + H(+). Functionally, the branched-chain alpha-keto dehydrogenase complex catalyzes the overall conversion of alpha-keto acids to acyl-CoA and CO(2). It contains multiple copies of 3 enzymatic components: branched-chain alpha-keto acid decarboxylase (E1), lipoamide acyltransferase (E2) and lipoamide dehydrogenase (E3). The polypeptide is Dihydrolipoyl dehydrogenase (bfmBC) (Bacillus subtilis (strain 168)).